The primary structure comprises 707 residues: Choline transporter-like protein 4 (707 aa).

The Cytoplasmic portion of the chain corresponds to 1–32 (MGKKQKENEAYGNSAKYDPSFRGPIKNRGCTD). The chain crosses the membrane as a helical span at residues 33 to 53 (IICCVLFLVFILGYIVVGLVA). Topologically, residues 54–227 (WVYGDPRQVL…KIFEDFAQSW (174 aa)) are extracellular. N-linked (GlcNAc...) asparagine glycosylation is found at asparagine 67, asparagine 185, asparagine 195, and asparagine 196. Residues 228–248 (YWILVALGVALVLSLLFILLL) form a helical membrane-spanning segment. The Cytoplasmic segment spans residues 249-250 (RL). Residues 251–271 (VAAPLVLLLIVGVLAVLAYGI) form a helical membrane-spanning segment. Over 272–307 (YHCWQQYRELRDQGVSITQLGFTANLSAYQNVKETW) the chain is Extracellular. Residue asparagine 296 is glycosylated (N-linked (GlcNAc...) asparagine). Residues 308–328 (LAALIILAVLEGVLLLMLIFL) traverse the membrane as a helical segment. Residues 329 to 356 (RQRIRIAIALLKEASRAVGQMMSTMFYP) are Cytoplasmic-facing. The helical transmembrane segment at 357-377 (LVTFVLLVICIGYWAVTALYL) threads the bilayer. At 378 to 452 (ATSGQPQYVY…GILGLFWTVN (75 aa)) the chain is on the extracellular side. N-linked (GlcNAc...) asparagine glycans are attached at residues asparagine 391, asparagine 403, and asparagine 413. Residues 453-473 (WVLALGQCVLAGAFASFYWAF) form a helical membrane-spanning segment. Over 474 to 498 (HKPRDIPTFPLSSAFIRTLRYHTGS) the chain is Cytoplasmic. A helical transmembrane segment spans residues 499 to 519 (LAFGALILTLVQIARVILEYI). Residues 520-557 (DHKLRGSQNPVARCIICCFKCCLWCLEKFIKFLNRNAY) are Extracellular-facing. The helical transmembrane segment at 558 to 578 (IMIAIYGKNFCVSAKNAFMLL) threads the bilayer. Topologically, residues 579 to 594 (MRNVVRVVVLDKVTDL) are cytoplasmic. Residues 595 to 615 (LLFFGKLLVVGGVGVLSFFFF) traverse the membrane as a helical segment. At 616–635 (SGRIKGLGKDFKNPDLNYYW) the chain is on the extracellular side. A helical transmembrane segment spans residues 636–656 (LPIMTSIMGAYVIASGFFSVF). Over 657–707 (GMCVDTLFLCFLEDLERNDGSQERPYYMPKALLKILGKKNEVPTGGKNRKK) the chain is Cytoplasmic.

It belongs to the CTL (choline transporter-like) family. N-glycosylated; N-glycosylation of Asn-67 and Asn-391 is required for a proper thiamine pyrophosphate uptake. In terms of tissue distribution, highly expressed in intestine, kidney and stomach. Also expressed in testis and lung.

It is found in the membrane. It localises to the apical cell membrane. The enzyme catalyses choline(out) + n H(+)(in) = choline(in) + n H(+)(out). The catalysed reaction is thiamine diphosphate(out) = thiamine diphosphate(in). Functionally, choline transporter that plays a role in the choline-acetylcholine system and is required to the efferent innervation of hair cells in the olivocochlear bundle for the maintenance of physiological function of outer hair cells and the protection of hair cells from acoustic injury. Also described as a thiamine pyrophosphate transporter in colon, may mediate the absorption of microbiota-generated thiamine pyrophosphate and contribute to host thiamine (vitamin B1) homeostasis. This chain is Choline transporter-like protein 4, found in Rattus norvegicus (Rat).